The primary structure comprises 539 residues: Probable quinate permease (539 aa).

The Cytoplasmic portion of the chain corresponds to 1-22 (MSILSMVEDRPTPKEVYNWRIY). The chain crosses the membrane as a helical span at residues 23-43 (LLAAVASFTSCMIGYDSAFIG). The Extracellular portion of the chain corresponds to 44–74 (TTISLDSFKNEFHWDSMSTAKQNLVSANIVS). The chain crosses the membrane as a helical span at residues 75-95 (CYQAGAFFGAFFAYPIGHFWG). The Cytoplasmic segment spans residues 96–97 (RK). The chain crosses the membrane as a helical span at residues 98–118 (WGLMLSALVFTLGAGLMLGAN). Topologically, residues 119-130 (GDRGLGLIYGGR) are extracellular. Residues 131–151 (VLAGLGVGAGSNFTPIYISEL) traverse the membrane as a helical segment. Residues 152–159 (APPAIRGR) are Cytoplasmic-facing. The helical transmembrane segment at 160–180 (LVGVYELGWQVGGLVGFWINY) threads the bilayer. Topologically, residues 181–193 (GVEQTMAPSHKQW) are extracellular. Residues 194–214 (LIPFAVQLIPAGLLIIGILFV) form a helical membrane-spanning segment. At 215 to 285 (KESPRWLFLR…AWTNKRILYR (71 aa)) the chain is on the cytoplasmic side. The chain crosses the membrane as a helical span at residues 286–306 (LFLGSMLFFWQNGSGINAINY). Residues 307-325 (YSPTVFKSIGLKGNSSSLL) lie on the Extracellular side of the membrane. The chain crosses the membrane as a helical span at residues 326–346 (TTGIFGVVKTVVTIVWLLYLI). Topologically, residues 347-352 (DHVGRR) are cytoplasmic. Residues 353 to 373 (LLLLIGAAGGSICMWIVGAYI) traverse the membrane as a helical segment. The Extracellular segment spans residues 374–387 (KVVDPTHNQSDHLN). The helical transmembrane segment at 388-408 (GGGVAAIFFFYLWTAFYTPSW) threads the bilayer. Topologically, residues 409–456 (NGTPWVINSEMFDPNIRSLAQACAAGSNWLWNFLISRFTPQMFAKMDY) are cytoplasmic. A helical transmembrane segment spans residues 457 to 477 (GVYFFFASLMLLSIPFVFFLV). The Extracellular portion of the chain corresponds to 478–539 (PETKGIPLEN…EQVEDTDRKE (62 aa)).

The protein belongs to the major facilitator superfamily. Sugar transporter (TC 2.A.1.1) family. As to quaternary structure, interacts with creB. Post-translationally, ubiquitinated. Deubiquitinated by creB, probably to control its activity or amount.

Its subcellular location is the cell membrane. In terms of biological role, integral membrane transporter that imports quinic acid to be catabolized as a carbon source. The sequence is that of Probable quinate permease (qutD) from Aspergillus niger (strain ATCC MYA-4892 / CBS 513.88 / FGSC A1513).